Here is a 273-residue protein sequence, read N- to C-terminus: Outer surface protein A (273 aa).

Residues 1–16 form the signal peptide; it reads MKKYLLGIGLILALIA. Cys-17 carries the N-palmitoyl cysteine lipid modification. A lipid anchor (S-diacylglycerol cysteine) is attached at Cys-17.

The protein belongs to the OspA lipoprotein family.

It localises to the cell outer membrane. It is found in the cell surface. The chain is Outer surface protein A from Borreliella burgdorferi (Lyme disease spirochete).